The following is a 1153-amino-acid chain: uncharacterized protein (1153 aa).

Disordered stretches follow at residues 164-193 (TTIK…QIDD), 224-245 (DNYD…DDDK), 294-316 (KSPQ…QSKH), 332-427 (EHKL…KNKK), 613-648 (LSML…EGEN), 683-703 (QQQQ…EEMS), 717-740 (KSDD…SKRK), 772-819 (NKKL…KTIE), 838-874 (ASSG…EDEK), and 942-1106 (NNNN…NNEV). The segment covering 169 to 179 (LPPPLPQPQPQ) has biased composition (pro residues). Low complexity-rich tracts occupy residues 231 to 240 (NNNNNNNNSN), 298 to 312 (KLKL…QQQK), 336 to 391 (QQQQ…TPKK), and 399 to 423 (NNVN…NNNN). The span at 613–625 (LSMLDSTNDGSSQ) shows a compositional bias: polar residues. The segment covering 687-699 (QEKEKQQQEKQQD) has biased composition (basic and acidic residues). A compositionally biased stretch (low complexity) spans 721–734 (NNNNNDNNNNNNNN). Residues 772–784 (NKKLRVDSEDQQT) show a composition bias toward basic and acidic residues. 2 stretches are compositionally biased toward low complexity: residues 788–808 (TTTT…NNNN) and 839–854 (SSGG…QNDS). A compositionally biased stretch (basic and acidic residues) spans 856 to 874 (TTKEKERSETIKTHNEDEK). The segment covering 942–987 (NNNNNNNNNINNINNIGNKNTTVNNSNHSNHSNNNINNNNIFKNSN) has biased composition (low complexity). 2 stretches are compositionally biased toward polar residues: residues 988–998 (PIVDTNFSSTT) and 1005–1015 (QSKIFTGNQLP). Low complexity predominate over residues 1019-1059 (INNENVVNNNNNNEINNTTTTTTNNNSGIHKNNNNYNSDNS). The span at 1064-1081 (DGLKQEKEEQKEEQKENK) shows a compositional bias: basic and acidic residues. Over residues 1082-1105 (NNNNNNNNNNNNNNNNNNNNNNNE) the composition is skewed to low complexity.

This is an uncharacterized protein from Dictyostelium discoideum (Social amoeba).